A 242-amino-acid polypeptide reads, in one-letter code: Protein GrpE (242 aa).

A compositionally biased stretch (polar residues) spans 1–10 (MAGENSSTET). The segment at 1-64 (MAGENSSTET…QSTESTSKEK (64 aa)) is disordered. Positions 11–20 (KNQEINEKTP) are enriched in basic and acidic residues. Polar residues-rich tracts occupy residues 21 to 32 (EVQTFETNVEFE) and 40 to 59 (DTEL…STES).

Belongs to the GrpE family. Homodimer.

The protein localises to the cytoplasm. Its function is as follows. Participates actively in the response to hyperosmotic and heat shock by preventing the aggregation of stress-denatured proteins, in association with DnaK and GrpE. It is the nucleotide exchange factor for DnaK and may function as a thermosensor. Unfolded proteins bind initially to DnaJ; upon interaction with the DnaJ-bound protein, DnaK hydrolyzes its bound ATP, resulting in the formation of a stable complex. GrpE releases ADP from DnaK; ATP binding to DnaK triggers the release of the substrate protein, thus completing the reaction cycle. Several rounds of ATP-dependent interactions between DnaJ, DnaK and GrpE are required for fully efficient folding. The polypeptide is Protein GrpE (Trichodesmium erythraeum (strain IMS101)).